The primary structure comprises 427 residues: FAD-dependent monooxygenase OpS4 (427 aa).

The signal sequence occupies residues 1–22; sequence MGSIREPLHLVVIGGGLAGLSA. E37 contacts FAD. An N-linked (GlcNAc...) asparagine glycan is attached at N54. FAD is bound by residues R112, D306, and A319.

It belongs to the paxM FAD-dependent monooxygenase family. FAD serves as cofactor.

The protein operates within secondary metabolite biosynthesis. Its function is as follows. FAD-dependent monooxygenase; part of the gene cluster that mediates the biosynthesis of the bibenzoquinone oosporein, a metabolite required for fungal virulence that acts by evading host immunity to facilitate fungal multiplication in insects. The non-reducing polyketide synthase OpS1 produces orsellinic acid by condensing acetyl-CoA with 3 malonyl-CoA units. Orsellinic acid is then hydroxylated to benzenetriol by the hydroxylase OpS4. The intermediate is oxidized either nonenzymatically to 5,5'-dideoxy-oosporein or enzymatically to benzenetetrol by the oxidoreductase OpS7. The latter is further dimerized to oosporein by the catalase OpS5. OpS6 probably functions en route for protecting cells against oxidative stress by scavenging any leaked free radical form of benzenetetrol by activating the thiol group of glutathione. This Beauveria bassiana (strain ARSEF 2860) (White muscardine disease fungus) protein is FAD-dependent monooxygenase OpS4.